The sequence spans 420 residues: DNA repair protein RadA (420 aa).

62-69 is a binding site for ATP; the sequence is GDPGIGKS. Residues 218 to 222 carry the RadA KNRFG motif motif; that stretch reads KNRFG. Positions 317-420 are lon-protease-like; it reads DAYLKSAGGV…IQEVLKKVFA (104 aa).

It belongs to the RecA family. RadA subfamily.

Functionally, plays a role in repairing double-strand DNA breaks, probably involving stabilizing or processing branched DNA or blocked replication forks. Required for efficient transformation with chromosomal (linear) DNA, but not for replicative plasmid DNA. Its increased sensitivity to a DNA damaging agent suggests it may be required for DNA repair. The sequence is that of DNA repair protein RadA from Streptococcus pneumoniae (strain ATCC BAA-255 / R6).